Here is an 81-residue protein sequence, read N- to C-terminus: Protein Vpu (81 aa).

Over 1–7 (MQPSQII) the chain is Extracellular. The helical transmembrane segment at 8–28 (AIAALVVAAIIAIVVWTIVFI) threads the bilayer. Over 29 to 81 (EYRRIKRQRKIDCIIDRIRERAEDSGNESEGDREELSKLVEMGHHAPWDIDDL) the chain is Cytoplasmic. Serine 53 and serine 57 each carry phosphoserine; by host CK2.

This sequence belongs to the HIV-1 VPU protein family. As to quaternary structure, homopentamer. Interacts with host CD4 and BRTC; these interactions induce proteasomal degradation of CD4. Interacts with host BST2; this interaction leads to the degradation of host BST2. Interacts with host FBXW11. Interacts with host AP1M1; this interaction plays a role in the mistrafficking and subsequent degradation of host BST2. Interacts with host RANBP2; this interaction allows Vpu to down-regulate host BLM sumoylation. Post-translationally, phosphorylated by host CK2. This phosphorylation is necessary for interaction with human BTRC and degradation of CD4.

The protein resides in the host membrane. Ion channel activity is inhibited by hexamethylene amiloride in vitro. In terms of biological role, enhances virion budding by targeting host CD4 and Tetherin/BST2 to proteasome degradation. Degradation of CD4 prevents any unwanted premature interactions between viral Env and its host receptor CD4 in the endoplasmic reticulum. Degradation of antiretroviral protein Tetherin/BST2 is important for virion budding, as BST2 tethers new viral particles to the host cell membrane. Mechanistically, Vpu bridges either CD4 or BST2 to BTRC, a substrate recognition subunit of the Skp1/Cullin/F-box protein E3 ubiquitin ligase, induces their ubiquitination and subsequent proteasomal degradation. The alteration of the E3 ligase specificity by Vpu seems to promote the degradation of host IKBKB, leading to NF-kappa-B down-regulation and subsequent apoptosis. Acts as a viroporin that forms an oligomeric ion channel in membranes. Modulates the host DNA repair mechanisms to promote degradation of nuclear viral cDNA in cells that are already productively infected in order to suppress immune sensing and proviral hyper-integration (superinfection). Manipulates PML-NBs and modulates SUMOylation of host BLM protein thereby enhancing its DNA-end processing activity toward viral unintegrated linear DNA. Also inhibits RAD52-mediated homologous repair of viral cDNA, preventing the generation of dead-end circular forms of single copies of the long terminal repeat and permitting sustained nucleolytic attack. This is Protein Vpu from Homo sapiens (Human).